The primary structure comprises 386 residues: Patatin-2-Kuras 2 (386 aa).

A signal peptide spans 1 to 23 (MATTKSFLILFFMILATTSSTCA). The 198-residue stretch at 32–229 (LSIDGGGIKG…TVGDPALLSL (198 aa)) folds into the PNPLA domain. The GXGXXG signature appears at 36–41 (GGGIKG). The GXSXG motif lies at 75-79 (GTSTG). The Nucleophile role is filled by serine 77. Residue asparagine 115 is glycosylated (N-linked (GlcNAc...) asparagine). Aspartate 215 (proton acceptor) is an active-site residue. The DGA/G signature appears at 215 to 217 (DGA). Positions 321 to 384 (ENALTGTTTE…DRKKLRANKA (64 aa)) form a coiled coil.

The protein belongs to the patatin family.

The protein localises to the vacuole. Functionally, probable lipolytic acyl hydrolase (LAH), an activity which is thought to be involved in the response of tubers to pathogens. The sequence is that of Patatin-2-Kuras 2 (pat2-k2) from Solanum tuberosum (Potato).